The chain runs to 92 residues: Large ribosomal subunit protein eL31 (92 aa).

This sequence belongs to the eukaryotic ribosomal protein eL31 family.

The protein is Large ribosomal subunit protein eL31 of Halobacterium salinarum (strain ATCC 29341 / DSM 671 / R1).